Reading from the N-terminus, the 354-residue chain is Guanine nucleotide-binding protein G(o) subunit alpha (354 aa).

Residue Gly2 is the site of N-myristoyl glycine attachment. Residue Cys3 is the site of S-palmitoyl cysteine attachment. The 323-residue stretch at Lys32–Tyr354 folds into the G-alpha domain. A G1 motif region spans residues Lys35 to Thr48. 9 residues coordinate GTP: Glu43, Lys46, Ser47, Thr48, Ser152, Leu176, Arg177, Thr178, and Arg179. Ser47 is a Mg(2+) binding site. Residues Asp174–Thr182 are G2 motif. Arg179 is modified (ADP-ribosylarginine; by cholera toxin). Thr182 is a binding site for Mg(2+). The G3 motif stretch occupies residues Phe197 to Arg206. Residue Gln205 is modified to 5-glutamyl histamine. The segment at Ile266–Asp273 is G4 motif. Positions 270, 273, and 325 each coordinate GTP. Residues Thr324 to Thr329 are G5 motif. A lipid anchor (S-palmitoyl cysteine) is attached at Cys351. Cys351 bears the ADP-ribosylcysteine; by pertussis toxin mark.

Belongs to the G-alpha family. G(i/o/t/z) subfamily. In terms of assembly, g proteins are composed of 3 units; alpha, beta and gamma. The alpha chain contains the guanine nucleotide binding site. Forms a complex with GNB1 and GNG3. Interacts with RGS14. Interacts with RGS16. Interacts with RGS19. Interacts (when palmitoylated) with ADGRG3. Post-translationally, histaminylated at Gln-205 residues by TGM2. In terms of processing, palmitoylated at Cys-351, leading to binding to ADGRG3.

Its subcellular location is the cell membrane. The protein localises to the membrane. The catalysed reaction is GTP + H2O = GDP + phosphate + H(+). The GTPase activity is promoted by GTPAse activators, such as RGS14, RGS16 and RGS19. Functionally, guanine nucleotide-binding proteins (G proteins) function as transducers downstream of G protein-coupled receptors (GPCRs) in numerous signaling cascades. The alpha chain contains the guanine nucleotide binding site and alternates between an active, GTP-bound state and an inactive, GDP-bound state. Signaling by an activated GPCR promotes GDP release and GTP binding. The alpha subunit has a low GTPase activity that converts bound GTP to GDP, thereby terminating the signal. Both GDP release and GTP hydrolysis are modulated by numerous regulatory proteins. Signaling is mediated via effector proteins, such as adenylate cyclase. Inhibits adenylate cyclase activity, leading to decreased intracellular cAMP levels. This chain is Guanine nucleotide-binding protein G(o) subunit alpha (GNAO1), found in Homo sapiens (Human).